We begin with the raw amino-acid sequence, 547 residues long: Rho GTPase-activating protein 36 (547 aa).

Positions 1-40 (MGGCIPFLKAARALCPRIMPPLLLLSAFIFLVSVLGGAPG) are cleaved as a signal peptide. Residues 226–426 (MSLNPIAKQI…AMIDNWDVLF (201 aa)) form the Rho-GAP domain. A disordered region spans residues 485–547 (AVLAQSKPSD…AKTGVSYFFP (63 aa)). Basic and acidic residues predominate over residues 524 to 539 (EQDRPLLRVPREKEAK).

In terms of assembly, may interacts (via the Rho-GAP domain) with the active form of RAC1. Detected in the outer root sheath of hair follicles at the level of the stem cell bulge, during the anagen and telogen phases of hair growth (at protein level).

GTPase activator for the Rho-type GTPases by converting them to an inactive GDP-bound state. The protein is Rho GTPase-activating protein 36 (ARHGAP36) of Homo sapiens (Human).